A 326-amino-acid polypeptide reads, in one-letter code: N-acetyl-gamma-glutamyl-phosphate reductase (326 aa).

Cys-155 is a catalytic residue.

The protein belongs to the NAGSA dehydrogenase family. Type 1 subfamily.

Its subcellular location is the cytoplasm. The enzyme catalyses N-acetyl-L-glutamate 5-semialdehyde + phosphate + NADP(+) = N-acetyl-L-glutamyl 5-phosphate + NADPH + H(+). It functions in the pathway amino-acid biosynthesis; L-arginine biosynthesis; N(2)-acetyl-L-ornithine from L-glutamate: step 3/4. Catalyzes the NADPH-dependent reduction of N-acetyl-5-glutamyl phosphate to yield N-acetyl-L-glutamate 5-semialdehyde. The chain is N-acetyl-gamma-glutamyl-phosphate reductase from Shewanella frigidimarina (strain NCIMB 400).